The sequence spans 311 residues: Cell division protein FtsQ (311 aa).

The tract at residues 1 to 28 is disordered; the sequence is MTTRSPARPLIARRSTPAPTPAPHDPAP. Over 1–46 the chain is Cytoplasmic; that stretch reads MTTRSPARPLIARRSTPAPTPAPHDPAPSRLSYRVTRLWLTPIFRK. The chain crosses the membrane as a helical span at residues 47–67; that stretch reads ALHLGIPVFALFAAVTWYLGD. The Periplasmic portion of the chain corresponds to 68 to 311; that stretch reads ETRVAELFEA…AERPDGDTRG (244 aa). A POTRA domain is found at 91 to 159; sequence FRVNVLGIDG…GYLAVRIDER (69 aa).

The protein belongs to the FtsQ/DivIB family. FtsQ subfamily.

Its subcellular location is the cell inner membrane. Essential cell division protein. The protein is Cell division protein FtsQ of Jannaschia sp. (strain CCS1).